Here is a 141-residue protein sequence, read N- to C-terminus: Relaxin-3 (141 aa).

An N-terminal signal peptide occupies residues 1–24 (MAMLGLLLLASWALLGALGLQAEA). 3 cysteine pairs are disulfide-bonded: C34-C128, C46-C141, and C127-C132. A propeptide spans 54–117 (ADILAHESLG…GSPGVVRGSR (64 aa)) (connecting peptide).

This sequence belongs to the insulin family. Heterodimer of a B chain and an A chain linked by two disulfide bonds. As to expression, high expression in the brain localized to the pons/medulla with highest levels in pars ventromedialis of the dorsal tegmental nucleus. Significant expression is also detected in the spleen, thymus, lung, testis and ovary.

It localises to the secreted. Its function is as follows. May play a role in neuropeptide signaling processes. Ligand for LGR7, relaxin-3 receptor-1 and relaxin-3 receptor-2. This chain is Relaxin-3 (Rln3), found in Mus musculus (Mouse).